Here is a 566-residue protein sequence, read N- to C-terminus: Protein pacG (566 aa).

The segment at residues 79–326 is a DNA-binding region (NDT80); it reads TSFDPPPPAE…RSPRNFQSRK (248 aa). Disordered regions lie at residues 314-422 and 448-470; these read VRGR…EAHR and DSRPHTSFSNDLASKSLSVDSGR. Over residues 333–349 the composition is skewed to low complexity; that stretch reads SAAASRKNAQAAAASNN. 3 stretches are compositionally biased toward polar residues: residues 365 to 391, 403 to 413, and 452 to 466; these read VKSSSPETSSNGVPQQSPPNWALATNS, HSSVYSQSSPE, and HTSFSNDLASKSLSV.

The protein resides in the nucleus. It localises to the cytoplasm. Its function is as follows. Transcription factor that acts as a positive regulator of nonrepressible acid phosphatase activity. Is a major regulator of responses to nitrogen and carbon starvation and is essential for the expression of genes involved in vegetative incompatibility (like pin-c, het-6, and tol). Vegetative incompatibility is a non-self-recognition system ubiquitous in filamentous fungi which results in programmed cell death. In Emericella nidulans (strain FGSC A4 / ATCC 38163 / CBS 112.46 / NRRL 194 / M139) (Aspergillus nidulans), this protein is Protein pacG (pacG).